Consider the following 612-residue polypeptide: Zinc metalloproteinase nas-36 (612 aa).

An N-terminal signal peptide occupies residues 1 to 16 (MLLLVLLFVFISATNA). N15 carries N-linked (GlcNAc...) asparagine glycosylation. Residues 17 to 122 (SDVGRRELEK…KSKPNVRGRR (106 aa)) constitute a propeptide that is removed on maturation. Residues 123 to 320 (SFDASPESKW…IETINKAYCS (198 aa)) enclose the Peptidase M12A domain. N163 carries an N-linked (GlcNAc...) asparagine glycan. Cystine bridges form between C166/C319, C190/C209, C329/C343, C345/C354, C365/C394, C515/C546, C519/C551, and C531/C536. H217 serves as a coordination point for Zn(2+). E218 is an active-site residue. Residues H221 and H227 each contribute to the Zn(2+) site. An EGF-like domain is found at 320-355 (SDRCSGSNDCKNGGYPHPKQCDTCLCPNGLSGPKCE). Residues 365-478 (CGGKIVVKEE…VGFKLQARAT (114 aa)) form the CUB domain. Residues 503–552 (TDQWAEWGSWSQCSRSCGGCGIMSRVRVCRTKQCKGRRQEFSTCNLKACP) enclose the TSP type-1 domain.

Zn(2+) serves as cofactor.

Its subcellular location is the secreted. Its activity is regulated as follows. Inhibited by 1,10-phenanthroline. Its function is as follows. Metalloprotease. Involved in molting, a process during larval stages in which a new cuticle is formed and the old cuticle is shed. This Haemonchus contortus (Barber pole worm) protein is Zinc metalloproteinase nas-36.